The primary structure comprises 206 residues: Small ribosomal subunit protein uS4 (206 aa).

One can recognise an S4 RNA-binding domain in the interval Gly-96 to Lys-156.

The protein belongs to the universal ribosomal protein uS4 family. In terms of assembly, part of the 30S ribosomal subunit. Contacts protein S5. The interaction surface between S4 and S5 is involved in control of translational fidelity.

Functionally, one of the primary rRNA binding proteins, it binds directly to 16S rRNA where it nucleates assembly of the body of the 30S subunit. With S5 and S12 plays an important role in translational accuracy. The protein is Small ribosomal subunit protein uS4 of Histophilus somni (strain 129Pt) (Haemophilus somnus).